Reading from the N-terminus, the 167-residue chain is Photosystem I assembly protein Ycf3 (167 aa).

TPR repeat units lie at residues 35-68 (AFSY…ETDA), 72-105 (SYIL…NPSL), and 120-153 (GEQA…APTN).

It belongs to the Ycf3 family.

The protein resides in the plastid. The protein localises to the chloroplast thylakoid membrane. Essential for the assembly of the photosystem I (PSI) complex. May act as a chaperone-like factor to guide the assembly of the PSI subunits. This Chlorella vulgaris (Green alga) protein is Photosystem I assembly protein Ycf3.